A 572-amino-acid chain; its full sequence is Methionine--tRNA ligase (572 aa).

Residues 11 to 21 (PYINGIKHLGN) carry the 'HIGH' region motif. Residues C143, C146, C156, and C159 each contribute to the Zn(2+) site. The short motif at 346–350 (QFSTS) is the 'KMSKS' region element. T349 is an ATP binding site.

The protein belongs to the class-I aminoacyl-tRNA synthetase family. MetG type 1 subfamily. As to quaternary structure, monomer. Zn(2+) is required as a cofactor.

The protein localises to the cytoplasm. It carries out the reaction tRNA(Met) + L-methionine + ATP = L-methionyl-tRNA(Met) + AMP + diphosphate. Functionally, is required not only for elongation of protein synthesis but also for the initiation of all mRNA translation through initiator tRNA(fMet) aminoacylation. The chain is Methionine--tRNA ligase from Cereibacter sphaeroides (strain ATCC 17029 / ATH 2.4.9) (Rhodobacter sphaeroides).